The sequence spans 427 residues: Glutamate-1-semialdehyde 2,1-aminomutase (427 aa).

Lys-265 is subject to N6-(pyridoxal phosphate)lysine.

This sequence belongs to the class-III pyridoxal-phosphate-dependent aminotransferase family. HemL subfamily. Homodimer. The cofactor is pyridoxal 5'-phosphate.

The protein resides in the cytoplasm. The catalysed reaction is (S)-4-amino-5-oxopentanoate = 5-aminolevulinate. It participates in porphyrin-containing compound metabolism; protoporphyrin-IX biosynthesis; 5-aminolevulinate from L-glutamyl-tRNA(Glu): step 2/2. This chain is Glutamate-1-semialdehyde 2,1-aminomutase, found in Pseudomonas entomophila (strain L48).